The chain runs to 341 residues: ATPase GET3 (341 aa).

34–41 provides a ligand contact to ATP; sequence KGGVGKTT. Residue D63 is part of the active site. E245 and N272 together coordinate ATP. Zn(2+)-binding residues include C283 and C286.

It belongs to the arsA ATPase family. Homodimer.

Its subcellular location is the cytoplasm. The protein resides in the endoplasmic reticulum. Its function is as follows. ATPase required for the post-translational delivery of tail-anchored (TA) proteins to the endoplasmic reticulum. Recognizes and selectively binds the transmembrane domain of TA proteins in the cytosol. This complex then targets to the endoplasmic reticulum by membrane-bound receptors, where the tail-anchored protein is released for insertion. This process is regulated by ATP binding and hydrolysis. ATP binding drives the homodimer towards the closed dimer state, facilitating recognition of newly synthesized TA membrane proteins. ATP hydrolysis is required for insertion. Subsequently, the homodimer reverts towards the open dimer state, lowering its affinity for the membrane-bound receptor, and returning it to the cytosol to initiate a new round of targeting. The sequence is that of ATPase GET3 from Paracoccidioides lutzii (strain ATCC MYA-826 / Pb01) (Paracoccidioides brasiliensis).